The following is a 154-amino-acid chain: MGLSDQEWQQVLSIWGKVESDLAGHGHQVLMRLFQDHPETLDRFDKFKGLKTPDQMKGSEDLKKHGVTVLTQLGKILKQKGNHESELKPLAQTHATKHKIPVKYLEFISEAIMKVIAEKHAADFGGDSQAAMKKALELFRNDMASKYKEFGFQG.

One can recognise a Globin domain in the interval 2–148 (GLSDQEWQQV…FRNDMASKYK (147 aa)). Position 65 (H65) interacts with nitrite. An O2-binding site is contributed by H65. Position 94 (H94) interacts with heme b.

Belongs to the globin family. As to quaternary structure, monomeric.

Its subcellular location is the cytoplasm. The protein resides in the sarcoplasm. The enzyme catalyses Fe(III)-heme b-[protein] + nitric oxide + H2O = Fe(II)-heme b-[protein] + nitrite + 2 H(+). It catalyses the reaction H2O2 + AH2 = A + 2 H2O. In terms of biological role, monomeric heme protein which primary function is to store oxygen and facilitate its diffusion within muscle tissues. Reversibly binds oxygen through a pentacoordinated heme iron and enables its timely and efficient release as needed during periods of heightened demand. Depending on the oxidative conditions of tissues and cells, and in addition to its ability to bind oxygen, it also has a nitrite reductase activity whereby it regulates the production of bioactive nitric oxide. Under stress conditions, like hypoxia and anoxia, it also protects cells against reactive oxygen species thanks to its pseudoperoxidase activity. The sequence is that of Myoglobin (MB) from Aethia pygmaea (Whiskered auklet).